A 300-amino-acid chain; its full sequence is Ribosomal protein bS6--L-glutamate ligase (300 aa).

An ATP-grasp domain is found at 104–287 (MQLLARQGID…IAGKMIRWIE (184 aa)). Residues Lys-141, 178–179 (EY), Asp-187, and 211–213 (RSN) contribute to the ATP site. 3 residues coordinate Mg(2+): Asp-248, Glu-260, and Asn-262. 3 residues coordinate Mn(2+): Asp-248, Glu-260, and Asn-262.

This sequence belongs to the RimK family. Mg(2+) is required as a cofactor. Requires Mn(2+) as cofactor.

An L-glutamate ligase that catalyzes the ATP-dependent post-translational addition of glutamate residues to the C-terminus of ribosomal protein bS6 (RpsF). Is also able to catalyze the synthesis of poly-alpha-glutamate in vitro, via ATP hydrolysis from unprotected glutamate as substrate. The number of glutamate residues added to either RpsF or to poly-alpha-glutamate changes with pH. The chain is Ribosomal protein bS6--L-glutamate ligase from Shigella flexneri serotype 5b (strain 8401).